Consider the following 178-residue polypeptide: MKIIITGEPGVGKTTLVKKIVERLGKRAIGFWTEEVRDPETKKRTGFRIITTEGKKKIFSSKFFTSKKLVGSYGVNVQYFEELAIPILERAYREAKKDRRKVIIIDEIGKMELFSKKFRDLVRQIMHDPNVNVVATIPIRDVHPLVKEIRRLPGAVLIELTPENRDVILEDILSLLER.

ATP is bound by residues 7–14 (GEPGVGKT) and 102–109 (VIIIDEIG).

Belongs to the THEP1 NTPase family. In terms of assembly, monomer.

It carries out the reaction a ribonucleoside 5'-triphosphate + H2O = a ribonucleoside 5'-diphosphate + phosphate + H(+). In terms of biological role, has nucleotide phosphatase activity towards ATP, GTP, CTP, TTP and UTP. May hydrolyze nucleoside diphosphates with lower efficiency. Does not have kinase activity. This is Nucleoside-triphosphatase THEP1 from Aquifex aeolicus (strain VF5).